A 78-amino-acid chain; its full sequence is U7-lycotoxin-Ls1d (78 aa).

The first 22 residues, 1-22, serve as a signal peptide directing secretion; that stretch reads MKLIIFTGLALLLIVSLIDVEA. A propeptide spanning residues 23-26 is cleaved from the precursor; the sequence is QNEG.

Belongs to the neurotoxin 19 (CSTX) family. 07 (U7-Lctx) subfamily. In terms of processing, contains 4 disulfide bonds. As to expression, expressed by the venom gland.

It is found in the secreted. This is U7-lycotoxin-Ls1d from Lycosa singoriensis (Wolf spider).